Here is a 160-residue protein sequence, read N- to C-terminus: Phosphopantetheine adenylyltransferase (160 aa).

Substrate is bound at residue Thr-9. ATP contacts are provided by residues 9–10 (TF) and His-17. Substrate is bound by residues Lys-41, Leu-73, and Arg-87. ATP is bound by residues 88–90 (GLR), Glu-98, and 123–129 (LSYISST).

It belongs to the bacterial CoaD family. In terms of assembly, homohexamer. Requires Mg(2+) as cofactor.

The protein localises to the cytoplasm. The enzyme catalyses (R)-4'-phosphopantetheine + ATP + H(+) = 3'-dephospho-CoA + diphosphate. Its pathway is cofactor biosynthesis; coenzyme A biosynthesis; CoA from (R)-pantothenate: step 4/5. Reversibly transfers an adenylyl group from ATP to 4'-phosphopantetheine, yielding dephospho-CoA (dPCoA) and pyrophosphate. The chain is Phosphopantetheine adenylyltransferase from Marinobacter nauticus (strain ATCC 700491 / DSM 11845 / VT8) (Marinobacter aquaeolei).